The chain runs to 532 residues: NADH-quinone oxidoreductase subunit N 2 (532 aa).

14 helical membrane-spanning segments follow: residues 37-57 (VAPP…DLFL), 63-83 (RLLG…LIPL), 107-127 (FTLV…LLSL), 133-153 (LPAG…ALLP), 158-178 (LATL…LVGI), 192-212 (FFLS…FVYA), 241-261 (VALT…HFWV), 276-296 (LSVV…VVAF), 302-322 (VWGP…NVAA), 336-356 (LLAW…AAAA), 367-387 (VAYA…AAVV), 411-431 (LALG…IGLF), 444-464 (GLGW…YYYL), and 504-524 (TAIV…QTVL).

The protein belongs to the complex I subunit 2 family. In terms of assembly, NDH-1 is composed of 14 different subunits. Subunits NuoA, H, J, K, L, M, N constitute the membrane sector of the complex.

The protein resides in the cell membrane. It carries out the reaction a quinone + NADH + 5 H(+)(in) = a quinol + NAD(+) + 4 H(+)(out). Its function is as follows. NDH-1 shuttles electrons from NADH, via FMN and iron-sulfur (Fe-S) centers, to quinones in the respiratory chain. The immediate electron acceptor for the enzyme in this species is believed to be a menaquinone. Couples the redox reaction to proton translocation (for every two electrons transferred, four hydrogen ions are translocated across the cytoplasmic membrane), and thus conserves the redox energy in a proton gradient. In Streptomyces griseus subsp. griseus (strain JCM 4626 / CBS 651.72 / NBRC 13350 / KCC S-0626 / ISP 5235), this protein is NADH-quinone oxidoreductase subunit N 2.